A 122-amino-acid chain; its full sequence is Ribosome-binding factor A (122 aa).

It belongs to the RbfA family. In terms of assembly, monomer. Binds 30S ribosomal subunits, but not 50S ribosomal subunits or 70S ribosomes.

The protein resides in the cytoplasm. Functionally, one of several proteins that assist in the late maturation steps of the functional core of the 30S ribosomal subunit. Associates with free 30S ribosomal subunits (but not with 30S subunits that are part of 70S ribosomes or polysomes). Required for efficient processing of 16S rRNA. May interact with the 5'-terminal helix region of 16S rRNA. This Burkholderia mallei (strain NCTC 10229) protein is Ribosome-binding factor A.